Here is a 617-residue protein sequence, read N- to C-terminus: V-type proton ATPase catalytic subunit A (617 aa).

A Phosphothreonine modification is found at T136. 250–257 (GAFGCGKT) is an ATP binding site. Residue S384 is modified to Phosphoserine; by AMPK.

The protein belongs to the ATPase alpha/beta chains family. In terms of assembly, V-ATPase is a heteromultimeric enzyme made up of two complexes: the ATP-hydrolytic V1 complex and the proton translocation V0 complex. The V1 complex consists of three catalytic AB heterodimers that form a heterohexamer, three peripheral stalks each consisting of EG heterodimers, one central rotor including subunits D and F, and the regulatory subunits C and H. The proton translocation complex V0 consists of the proton transport subunit a, a ring of proteolipid subunits c9c'', rotary subunit d, subunits e and f, and the accessory subunits ATP6AP1/Ac45 and ATP6AP2/PRR. Interacts with the V0 complex V-ATPase subunit a4 ATP6V0A4. Interacts with WFS1. Interacts with alpha-crystallin B chain/CRYAB and with MTOR, forming a ternary complex. Post-translationally, phosphorylation at Ser-384 by AMPK down-regulates its enzyme activity.

The protein resides in the cytoplasm. Its subcellular location is the cytosol. It localises to the cytoplasmic vesicle. The protein localises to the secretory vesicle. It is found in the clathrin-coated vesicle membrane. The protein resides in the lysosome. The enzyme catalyses ATP + H2O + 4 H(+)(in) = ADP + phosphate + 5 H(+)(out). With respect to regulation, ATP hydrolysis occurs at the interface between the nucleotide-binding domains of subunits A and B. ATP hydrolysis triggers a conformational change in the subunits D and F, which induces a shift of subunit d. The c-ring is subsequently rotated and results in a continuous proton translocation across the membrane. Functionally, catalytic subunit of the V1 complex of vacuolar(H+)-ATPase (V-ATPase), a multisubunit enzyme composed of a peripheral complex (V1) that hydrolyzes ATP and a membrane integral complex (V0) that translocates protons. V-ATPase is responsible for acidifying and maintaining the pH of intracellular compartments and in some cell types, is targeted to the plasma membrane, where it is responsible for acidifying the extracellular environment. In aerobic conditions, involved in intracellular iron homeostasis, thus triggering the activity of Fe(2+) prolyl hydroxylase (PHD) enzymes, and leading to HIF1A hydroxylation and subsequent proteasomal degradation. May play a role in neurite development and synaptic connectivity. This Sus scrofa (Pig) protein is V-type proton ATPase catalytic subunit A (ATP6V1A).